Reading from the N-terminus, the 696-residue chain is Glycosyltransferase GlyA (696 aa).

Residues 1–301 (MLVDDKITVI…NQLSRQEESE (301 aa)) are GT2 domain. A GT8 domain region spans residues 302–556 (KKAIVLAANY…TELGQNHHLH (255 aa)). UDP contacts are provided by residues 308 to 313 (AANYGY) and 399 to 400 (DC). Mn(2+) contacts are provided by aspartate 399, aspartate 401, and histidine 518. 518–524 (HYLSHRK) is a binding site for UDP.

In the N-terminal section; belongs to the glycosyltransferase 2 family. It in the central section; belongs to the glycosyltransferase 8 family.

Its pathway is protein modification; protein glycosylation. In terms of biological role, involved in the polymorphic O-glycosylation of the serine-rich repeat protein PsrP. Catalyzes the fourth step in glycosylation of PsrP in this bacteria. Can transfer the sugar from UDP-galactose to the terminal sugar moiety of PsrP-GlcNAc-Glc-Gal or of PsrP-GlcNAc-Glc-Glc (using truncated substrates with the PsrP SSR1 domain). Has hydrolytic activity against UDP-galactose and to a lesser extent against UDP-glucose. In Streptococcus pneumoniae serotype 4 (strain ATCC BAA-334 / TIGR4), this protein is Glycosyltransferase GlyA.